We begin with the raw amino-acid sequence, 352 residues long: Extracellular minor metalloprotease (352 aa).

Disordered stretches follow at residues 41-86 (GNKP…QPRR) and 144-164 (TARSSTVSPSPSTLVGHELTH). A compositionally biased stretch (basic and acidic residues) spans 48 to 57 (PTEKNARAGE). Low complexity-rich tracts occupy residues 71–85 (ARQTGAQGGAAQQPR) and 144–156 (TARSSTVSPSPST). His-160 serves as a coordination point for Zn(2+). The active site involves Glu-161. The Zn(2+) site is built by His-164 and Glu-184. The active-site Proton donor is His-262. The tract at residues 303 to 325 (TPTSDHLRPRHGETRAGLRTKRG) is disordered. Basic and acidic residues predominate over residues 304-325 (PTSDHLRPRHGETRAGLRTKRG).

Belongs to the peptidase M4 family. Zn(2+) is required as a cofactor.

The protein resides in the secreted. The chain is Extracellular minor metalloprotease (smp) from Serratia marcescens (strain ATCC 21074 / E-15).